A 162-amino-acid chain; its full sequence is Glycogen accumulation regulator GarA (162 aa).

Thr-21 carries the post-translational modification Phosphothreonine; by PknG. A Phosphothreonine; by PknB modification is found at Thr-22. One can recognise an FHA domain in the interval 77 to 126 (TSAGRHPDSDIFLDDVTVSRRHAEFRLENNEFNVVDVGSLNGTYVNREPV).

Monomer. In terms of processing, phosphorylated on Thr-22 by PknB. Phosphorylated on Thr-21 by PknG. Phosphorylation at either Thr-21 or Thr-22 prevents binding to target enzymes.

Involved in regulation of glutamate metabolism. This is Glycogen accumulation regulator GarA (garA) from Mycobacterium tuberculosis (strain CDC 1551 / Oshkosh).